The following is a 327-amino-acid chain: Eukaryotic translation initiation factor 3 subunit I (327 aa).

WD repeat units follow at residues 8–49 (GHER…GSYD), 51–89 (HNGA…CLYT), 188–227 (VHRY…KLKQ), 229–268 (KSER…GHFE), and 285–324 (GHFG…LGFT).

It belongs to the eIF-3 subunit I family. As to quaternary structure, component of the eukaryotic translation initiation factor 3 (eIF-3) complex.

It is found in the cytoplasm. Its function is as follows. Component of the eukaryotic translation initiation factor 3 (eIF-3) complex, which is involved in protein synthesis of a specialized repertoire of mRNAs and, together with other initiation factors, stimulates binding of mRNA and methionyl-tRNAi to the 40S ribosome. The eIF-3 complex specifically targets and initiates translation of a subset of mRNAs involved in cell proliferation. The protein is Eukaryotic translation initiation factor 3 subunit I of Caenorhabditis elegans.